Reading from the N-terminus, the 145-residue chain is Alpha-amylase/trypsin inhibitor CMa (145 aa).

Positions 1–25 (MASKSSITPLLLAAVLASVFAAATA) are cleaved as a signal peptide.

This sequence belongs to the protease inhibitor I6 (cereal trypsin/alpha-amylase inhibitor) family. In terms of assembly, heterotetramer of one CMa, one CMb and two CMd chains. Post-translationally, five disulfide bonds, which are essential for the inhibitor activity, are probably present. In terms of tissue distribution, endosperm.

It is found in the secreted. Alpha-amylase/trypsin inhibitor. It could be involved in insect defense mechanisms. This is Alpha-amylase/trypsin inhibitor CMa (IAT1) from Hordeum vulgare (Barley).